Here is a 475-residue protein sequence, read N- to C-terminus: GTPase Der (475 aa).

2 EngA-type G domains span residues L2 to E166 and L213 to S386. GTP contacts are provided by residues G8–S15, D55–V59, N118–D121, G219–S226, D266–L270, and N331–D334. The region spanning R387–A471 is the KH-like domain.

Belongs to the TRAFAC class TrmE-Era-EngA-EngB-Septin-like GTPase superfamily. EngA (Der) GTPase family. In terms of assembly, associates with the 50S ribosomal subunit.

Its function is as follows. GTPase that plays an essential role in the late steps of ribosome biogenesis. This Chlamydia felis (strain Fe/C-56) (Chlamydophila felis) protein is GTPase Der.